A 471-amino-acid polypeptide reads, in one-letter code: Thiohydroximate-O-sulfate sulfur/sulfate-lyase (nitrile-forming) NSP2 (471 aa).

One can recognise a Jacalin-type lectin domain in the interval 2 to 144 (VQKVEARGGE…LHSLGAYISS (143 aa)). Kelch repeat units follow at residues 178–226 (KIFS…VRMV), 231–277 (SLYV…SMTA), 281–330 (NVYV…VVQG), 332–379 (VWVV…VVGK), 381–435 (ILVF…GWSA), and 446–471 (GLVMFGGKAQTNDRFGDLFFYGVDSA). Arg-238 (proton donor) is an active-site residue. A (Z)-N-(sulfonatooxy)alkanimidothioate-binding residues include Arg-238, Ser-271, Arg-293, Gly-322, and Val-371. Catalysis depends on Arg-293, which acts as the Proton donor. Positions 387, 391, and 395 each coordinate Fe(2+). Trp-433 is a binding site for a (Z)-N-(sulfonatooxy)alkanimidothioate.

Belongs to the jacalin lectin family. It depends on Fe(2+) as a cofactor. Expressed only in seeds.

The enzyme catalyses a (Z)-N-(sulfonatooxy)alkanimidothioate = a nitrile + sulfur + sulfate. It carries out the reaction (Z)-phenyl-N-(sulfonatooxy)methanimidothioate = phenylacetonitrile + sulfur + sulfate. The catalysed reaction is (Z)-N-(sulfonatooxy)prop-2-enimidothioate = but-3-enenitrile + sulfur + sulfate. It catalyses the reaction (Z)-(indol-3-yl)-N-(sulfonatooxy)methanimidothioate = (indol-3-yl)acetonitrile + sulfur + sulfate. Its activity is regulated as follows. The presence of Fe(2+) supports lyase activity in a dose-dependent manner with both benzylglucosinolate and 2-propenylglucosinolate as substrates. More active at pH 7.4 than at pH 6. Its function is as follows. Specifier protein responsible for constitutive and herbivore-induced simple nitrile formation, especially in seeds. Promotes simple nitriles, but not epithionitrile or thiocyanate formation. Converts allylglucosinolate (allyl-GSL), 2-propenylglucosinolate (sinigrin), indol-3-ylmethylglucosinolate (glucobrassicin), benzylisothiocyanate and benzylglucosinolate (glucotropaeolin) to their corresponding simple nitriles in the presence of myrosinase. Catalyzes mainly the conversion of benzylisothiocyanate when benzylglucosinolate is used as the initial substrate of myrosinase. Involved in the regulation of glucosinolate content in seeds, during stratification and germination. This is Thiohydroximate-O-sulfate sulfur/sulfate-lyase (nitrile-forming) NSP2 from Arabidopsis thaliana (Mouse-ear cress).